We begin with the raw amino-acid sequence, 118 residues long: Small ribosomal subunit protein uS13 (118 aa).

The disordered stretch occupies residues 92–118; that stretch reads RKGLPVRGQRTKTNARTRKGPRKPIRK.

Belongs to the universal ribosomal protein uS13 family. Part of the 30S ribosomal subunit. Forms a loose heterodimer with protein S19. Forms two bridges to the 50S subunit in the 70S ribosome.

In terms of biological role, located at the top of the head of the 30S subunit, it contacts several helices of the 16S rRNA. In the 70S ribosome it contacts the 23S rRNA (bridge B1a) and protein L5 of the 50S subunit (bridge B1b), connecting the 2 subunits; these bridges are implicated in subunit movement. Contacts the tRNAs in the A and P-sites. The chain is Small ribosomal subunit protein uS13 from Pseudomonas putida (strain ATCC 700007 / DSM 6899 / JCM 31910 / BCRC 17059 / LMG 24140 / F1).